Here is a 61-residue protein sequence, read N- to C-terminus: Large ribosomal subunit protein uL30 (61 aa).

The protein belongs to the universal ribosomal protein uL30 family. Part of the 50S ribosomal subunit.

The chain is Large ribosomal subunit protein uL30 from Corynebacterium efficiens (strain DSM 44549 / YS-314 / AJ 12310 / JCM 11189 / NBRC 100395).